The following is a 108-amino-acid chain: Replication restart protein PriB (108 aa).

One can recognise an SSB domain in the interval 8-108 (VDNRFSLIGK…LHAEQIEFIE (101 aa)).

Belongs to the PriB family. Homodimer. Interacts with PriA and DnaT. Component of the replication restart primosome. Primosome assembly occurs via a 'hand-off' mechanism. PriA binds to replication forks, subsequently PriB then DnaT bind; DnaT then displaces ssDNA to generate the helicase loading substrate.

Involved in the restart of stalled replication forks, which reloads the replicative helicase on sites other than the origin of replication; the PriA-PriB pathway is the major replication restart pathway. During primosome assembly it facilitates complex formation between PriA and DnaT on DNA; stabilizes PriA on DNA. Stimulates the DNA unwinding activity of PriA helicase. The polypeptide is Replication restart protein PriB (Histophilus somni (strain 2336) (Haemophilus somnus)).